Reading from the N-terminus, the 268-residue chain is Shikimate dehydrogenase (NADP(+)) (268 aa).

Residues 14-16 (SKS) and threonine 61 contribute to the shikimate site. The active-site Proton acceptor is the lysine 65. Asparagine 86 and aspartate 102 together coordinate shikimate. NADP(+) contacts are provided by residues 126–130 (GAGGA), 149–154 (NRTFLK), and methionine 213. Shikimate is bound at residue tyrosine 215. Glycine 238 is an NADP(+) binding site.

This sequence belongs to the shikimate dehydrogenase family. Homodimer.

It carries out the reaction shikimate + NADP(+) = 3-dehydroshikimate + NADPH + H(+). It participates in metabolic intermediate biosynthesis; chorismate biosynthesis; chorismate from D-erythrose 4-phosphate and phosphoenolpyruvate: step 4/7. Functionally, involved in the biosynthesis of the chorismate, which leads to the biosynthesis of aromatic amino acids. Catalyzes the reversible NADPH linked reduction of 3-dehydroshikimate (DHSA) to yield shikimate (SA). This chain is Shikimate dehydrogenase (NADP(+)), found in Haemophilus influenzae (strain PittGG).